The primary structure comprises 271 residues: DNA repair protein RecO (271 aa).

It belongs to the RecO family.

Its function is as follows. Involved in DNA repair and RecF pathway recombination. This chain is DNA repair protein RecO, found in Synechococcus sp. (strain CC9311).